Here is a 315-residue protein sequence, read N- to C-terminus: ATP synthase gamma chain (315 aa).

The protein belongs to the ATPase gamma chain family. As to quaternary structure, F-type ATPases have 2 components, CF(1) - the catalytic core - and CF(0) - the membrane proton channel. CF(1) has five subunits: alpha(3), beta(3), gamma(1), delta(1), epsilon(1). CF(0) has three main subunits: a, b and c.

Its subcellular location is the cellular thylakoid membrane. In terms of biological role, produces ATP from ADP in the presence of a proton gradient across the membrane. The gamma chain is believed to be important in regulating ATPase activity and the flow of protons through the CF(0) complex. The protein is ATP synthase gamma chain of Cyanothece sp. (strain PCC 7425 / ATCC 29141).